The following is a 192-amino-acid chain: Peptide deformylase (192 aa).

Residues cysteine 102 and histidine 145 each coordinate Fe cation. Glutamate 146 is an active-site residue. Histidine 149 is a binding site for Fe cation.

It belongs to the polypeptide deformylase family. Fe(2+) serves as cofactor.

It catalyses the reaction N-terminal N-formyl-L-methionyl-[peptide] + H2O = N-terminal L-methionyl-[peptide] + formate. Its function is as follows. Removes the formyl group from the N-terminal Met of newly synthesized proteins. Requires at least a dipeptide for an efficient rate of reaction. N-terminal L-methionine is a prerequisite for activity but the enzyme has broad specificity at other positions. The polypeptide is Peptide deformylase (Thermus thermophilus (strain ATCC BAA-163 / DSM 7039 / HB27)).